A 26-amino-acid chain; its full sequence is Phospholipase A2 homolog A1 (26 aa).

Contains 7 disulfide bonds. In terms of tissue distribution, expressed by the venom gland.

The protein resides in the secreted. In Micrurus pyrrhocryptus (Coral snake), this protein is Phospholipase A2 homolog A1.